Here is a 426-residue protein sequence, read N- to C-terminus: MLDYRFIRENVDAVKENVKVRNVHADVDAIVHLYDQRVKLLAELQELQRARNENAQTMKSSLDALARSACVETGRALKDRIAHSERLLVQISDQLLSATQALPNMTHMCTPHGRSDSDNLEIKRCGVPPCFSFSPRDHVELARLLDIVDFEAGKKVSGIKFYYLKREGVLLEQALIMFGLQFLQERGFVPFLTPDIAREGMVCGLGFNPRGSGSNIYRIEGEHRCLVATAEITLGAYHAGEVLEERSLPRLYAGLSHCFRKEAGAAGQFSRGLYRVHQFTKLEMFAYCTPSDSECLHERLRSLEEEIFTALEIPFRVVEVCAGDLGAPAYRKWDLEAWMPGRQGGSWGEVTSASNCTDYQARRLNVRYKDAEGKKHYVHMLNGTALAISRVLIALLENGQDAEGRVRIPQALVPFCGFEYLYPRVL.

229 to 231 (TAE) is a binding site for L-serine. Residues 260-262 (RKE) and Val276 contribute to the ATP site. Glu283 is a binding site for L-serine. ATP is bound at residue 349–352 (EVTS). Residue Thr384 participates in L-serine binding.

It belongs to the class-II aminoacyl-tRNA synthetase family. Type-1 seryl-tRNA synthetase subfamily. As to quaternary structure, homodimer. The tRNA molecule binds across the dimer.

The protein localises to the cytoplasm. It carries out the reaction tRNA(Ser) + L-serine + ATP = L-seryl-tRNA(Ser) + AMP + diphosphate + H(+). The catalysed reaction is tRNA(Sec) + L-serine + ATP = L-seryl-tRNA(Sec) + AMP + diphosphate + H(+). Its pathway is aminoacyl-tRNA biosynthesis; selenocysteinyl-tRNA(Sec) biosynthesis; L-seryl-tRNA(Sec) from L-serine and tRNA(Sec): step 1/1. In terms of biological role, catalyzes the attachment of serine to tRNA(Ser). Is also able to aminoacylate tRNA(Sec) with serine, to form the misacylated tRNA L-seryl-tRNA(Sec), which will be further converted into selenocysteinyl-tRNA(Sec). The sequence is that of Serine--tRNA ligase from Treponema pallidum (strain Nichols).